The following is a 245-amino-acid chain: Uridylate kinase (245 aa).

Lys-20–Gly-23 contributes to the ATP binding site. Gly-60 is a binding site for UMP. The ATP site is built by Gly-61 and Arg-65. Residues Asp-80 and Ala-141 to Thr-148 each bind UMP. Positions 175 and 178 each coordinate ATP.

Belongs to the UMP kinase family. Homohexamer.

The protein resides in the cytoplasm. It catalyses the reaction UMP + ATP = UDP + ADP. It functions in the pathway pyrimidine metabolism; CTP biosynthesis via de novo pathway; UDP from UMP (UMPK route): step 1/1. Its activity is regulated as follows. Inhibited by UTP. In terms of biological role, catalyzes the reversible phosphorylation of UMP to UDP. This is Uridylate kinase from Arthrobacter sp. (strain FB24).